Consider the following 129-residue polypeptide: Antimicrobial peptide NK-lysin (129 aa).

The first 6 residues, 1 to 6, serve as a signal peptide directing secretion; that stretch reads PGLAFS. Residues 7-46 constitute a propeptide that is removed on maturation; sequence GLTPEHSALARAHPCDGEQFCQNLAPEDPQGDQLLQREEL. One can recognise a Saposin B-type domain in the interval 46-126; sequence LGLICESCRK…VDIKICKEKT (81 aa). 3 disulfides stabilise this stretch: C50–C122, C53–C116, and C81–C91. Residues 125 to 129 constitute a propeptide that is removed on maturation; the sequence is KTGLI.

Cytotoxic T and NK cells.

Its subcellular location is the secreted. Functionally, may be an effector molecule of cytotoxic activity. High activity against E.coli and B.megaterium, moderate against A.calcoaceticus and S.pyogenes. No activity against P.aeruginosa, S.aureus and Salmonella. Has some antifungal activity against C.albicans. In Sus scrofa (Pig), this protein is Antimicrobial peptide NK-lysin (NKL).